The primary structure comprises 283 residues: ATP phosphoribosyltransferase (283 aa).

Belongs to the ATP phosphoribosyltransferase family. Long subfamily. Mg(2+) serves as cofactor.

It localises to the cytoplasm. It carries out the reaction 1-(5-phospho-beta-D-ribosyl)-ATP + diphosphate = 5-phospho-alpha-D-ribose 1-diphosphate + ATP. The protein operates within amino-acid biosynthesis; L-histidine biosynthesis; L-histidine from 5-phospho-alpha-D-ribose 1-diphosphate: step 1/9. Feedback inhibited by histidine. In terms of biological role, catalyzes the condensation of ATP and 5-phosphoribose 1-diphosphate to form N'-(5'-phosphoribosyl)-ATP (PR-ATP). Has a crucial role in the pathway because the rate of histidine biosynthesis seems to be controlled primarily by regulation of HisG enzymatic activity. The protein is ATP phosphoribosyltransferase of Rhodococcus opacus (strain B4).